The chain runs to 420 residues: Reticulon-4 receptor-like 2 (420 aa).

A signal peptide spans 1–46 (MLPGLRRLLQAPASACLLLMLLALPLAAPSCPMLCTCYSSPPTVSC). 2 disulfide bridges follow: Cys31-Cys37 and Cys35-Cys46. Positions 47-60 (QANNFSSVPLSLPP) constitute an LRRNT domain. Residue Asn50 is glycosylated (N-linked (GlcNAc...) asparagine). LRR repeat units follow at residues 61 to 82 (STQR…TFGS), 83 to 104 (NLLT…TFRH), 107 to 129 (ALEE…TFQG), 132 to 153 (RLQS…IFRG), 156 to 177 (SLQY…LFAD), 180 to 201 (NLSH…VFRG), 204 to 225 (SLDR…AFRG), and 228 to 249 (RLTI…ALAD). Asn93 carries an N-linked (GlcNAc...) asparagine glycan. Asn236 carries an N-linked (GlcNAc...) asparagine glycan. The region spanning 261 to 312 (NPWACDCRARPLWAWFQRARVSSSDVTCATPPERQGRDLRALREADFQACPP) is the LRRCT domain. 2 disulfide bridges follow: Cys265/Cys288 and Cys267/Cys310. The disordered stretch occupies residues 308-399 (QACPPAAPTR…CQAPPDSRGP (92 aa)). An important for interaction with MAG region spans residues 315–327 (PTRPGSRARGNSS). Residues 351–360 (LPAEDSRGRQ) show a composition bias toward basic and acidic residues. The GPI-anchor amidated cysteine moiety is linked to residue Cys390. A propeptide spans 391–420 (QAPPDSRGPALSAGLPSPLLCLLLLVPHHL) (removed in mature form).

Belongs to the Nogo receptor family. In terms of assembly, interaction with MAG is controversial, and may be indirect. Does not interact with MAG, OMG and RTN4. Interacts with MAG. In terms of processing, undergoes zinc metalloproteinase-mediated ectodomain shedding in neuroblastoma cells; is released both as a full-length ectodomain and an N-terminal fragment containing the leucine-rich repeat (LRR) region of the protein. Post-translationally, N-glycosylated. As to expression, highly expressed in brain and liver. Expressed at lower levels in kidney, mammary gland, placenta, skeletal muscle, spleen and thyroid.

It is found in the cell membrane. Its subcellular location is the membrane raft. The protein localises to the cell projection. It localises to the dendrite. The protein resides in the perikaryon. It is found in the axon. In terms of biological role, cell surface receptor that plays a functionally redundant role in the inhibition of neurite outgrowth mediated by MAG. Plays a functionally redundant role in postnatal brain development. Contributes to normal axon migration across the brain midline and normal formation of the corpus callosum. Does not seem to play a significant role in regulating axon regeneration in the adult central nervous system. Protects motoneurons against apoptosis; protection against apoptosis is probably mediated by MAG. Like other family members, plays a role in restricting the number dendritic spines and the number of synapses that are formed during brain development. Signaling mediates activation of Rho and downstream reorganization of the actin cytoskeleton. The sequence is that of Reticulon-4 receptor-like 2 from Homo sapiens (Human).